The primary structure comprises 434 residues: Histidinol dehydrogenase (434 aa).

Substrate-binding residues include serine 242, glutamine 264, and histidine 267. 2 residues coordinate Zn(2+): glutamine 264 and histidine 267. Active-site proton acceptor residues include glutamate 332 and histidine 333. Positions 333, 366, 420, and 425 each coordinate substrate. Aspartate 366 serves as a coordination point for Zn(2+). Histidine 425 contributes to the Zn(2+) binding site.

It belongs to the histidinol dehydrogenase family. Requires Zn(2+) as cofactor.

The catalysed reaction is L-histidinol + 2 NAD(+) + H2O = L-histidine + 2 NADH + 3 H(+). It participates in amino-acid biosynthesis; L-histidine biosynthesis; L-histidine from 5-phospho-alpha-D-ribose 1-diphosphate: step 9/9. Functionally, catalyzes the sequential NAD-dependent oxidations of L-histidinol to L-histidinaldehyde and then to L-histidine. This chain is Histidinol dehydrogenase, found in Desulfotalea psychrophila (strain LSv54 / DSM 12343).